Here is a 325-residue protein sequence, read N- to C-terminus: Aldose 1-epimerase (325 aa).

73–74 (NR) lines the substrate pocket. Catalysis depends on histidine 177, which acts as the Proton donor. Residue aspartate 230 coordinates substrate. The active-site Proton acceptor is glutamate 283.

It belongs to the aldose epimerase family.

The catalysed reaction is alpha-D-glucose = beta-D-glucose. It functions in the pathway carbohydrate metabolism; hexose metabolism. This is Aldose 1-epimerase (galM) from Bacillus subtilis (strain 168).